We begin with the raw amino-acid sequence, 1178 residues long: Dual specificity mitogen-activated protein kinase kinase hemipterous (1178 aa).

2 disordered regions span residues 74–103 (SGSGISIAQRPAPPVPHATPFGSASASSSS) and 115–148 (ATGTFGGTYTPPTTRVSRATPTLPMLSSGPGGGL). 2 stretches are compositionally biased toward low complexity: residues 91-103 (ATPFGSASASSSS) and 115-128 (ATGTFGGTYTPPTT). The 260-residue stretch at 197 to 456 (LKHLGDLGNG…YPELLAQPFI (260 aa)) folds into the Protein kinase domain. ATP-binding positions include 203–211 (LGNGTSGNV) and lysine 226. Residue aspartate 320 is the Proton acceptor of the active site. The residue at position 348 (serine 348) is a Phosphoserine. A Phosphothreonine modification is found at threonine 352. The segment at 522-648 (TYAGQSPTNP…DESPKKESMF (127 aa)) is disordered. Residues 523–543 (YAGQSPTNPQKTIKPTQIPSY) show a composition bias toward polar residues. Low complexity predominate over residues 544 to 570 (QQQQSQFFMQSATQLPQTTTTTPTATT). Residues 574–593 (GGSGNGNGRGNGSGGSGNGS) are compositionally biased toward gly residues. Positions 594–608 (GSSSSASPLSPPSAG) are enriched in low complexity. The segment covering 636-646 (KYNDESPKKES) has biased composition (basic and acidic residues). A phosphoserine mark is found at serine 646 and serine 662. Disordered stretches follow at residues 715 to 783 (TTTP…LQPG), 797 to 851 (QNQL…STCS), 912 to 933 (GTSPTLQSRSPEQQSDYGGNGN), 999 to 1026 (TSPVASSMDRDQEPVHPQPPAYRSVVNN), 1042 to 1108 (SSSS…NRGQ), and 1122 to 1178 (GQPP…TIDQ). Over residues 724-734 (TENSQAYDSCD) the composition is skewed to polar residues. Low complexity-rich tracts occupy residues 735–783 (SSSN…LQPG), 808–817 (RYQQQRQQPP), and 837–851 (THSTSSQSSTQSTCS). Over residues 912–928 (GTSPTLQSRSPEQQSDY) the composition is skewed to polar residues. The segment covering 1042-1055 (SSSSNTSQSTSPTT) has biased composition (low complexity). Serine 1150 and serine 1154 each carry phosphoserine. A compositionally biased stretch (basic and acidic residues) spans 1168-1178 (PQRRIYRTIDQ).

The protein belongs to the protein kinase superfamily. STE Ser/Thr protein kinase family. MAP kinase kinase subfamily. Post-translationally, MAPKK is itself dependent on Ser/Thr phosphorylation for activity catalyzed by MAP kinase kinase kinases. Weakly autophosphorylated.

It carries out the reaction L-seryl-[protein] + ATP = O-phospho-L-seryl-[protein] + ADP + H(+). The enzyme catalyses L-threonyl-[protein] + ATP = O-phospho-L-threonyl-[protein] + ADP + H(+). It catalyses the reaction L-tyrosyl-[protein] + ATP = O-phospho-L-tyrosyl-[protein] + ADP + H(+). Required for the epithelial cell sheet movement called dorsal closure (DC), which allows establishment of the dorsal epidermis. Controls the expression in the dorsal epithelium edges of another dorsal closure gene, puckered (puc). Phosphorylates and activates the MAP kinase bsk; bsk signal transduction pathway mediates an immune response and morphogenesis. This chain is Dual specificity mitogen-activated protein kinase kinase hemipterous (hep), found in Drosophila melanogaster (Fruit fly).